The primary structure comprises 173 residues: Disulfide bond formation protein B 2 (173 aa).

Residues 1 to 9 are Cytoplasmic-facing; sequence MSLAGSRLL. Residues 10-26 form a helical membrane-spanning segment; sequence FSLVFLVGALASWAAFN. Topologically, residues 27–44 are periplasmic; sequence LQTGGGLESCSLWSVQRL. Residues 45–61 traverse the membrane as a helical segment; it reads LLLALGGVNLLAVIQGP. Topologically, residues 62–67 are cytoplasmic; that stretch reads GRVGRA. The helical transmembrane segment at 68–85 threads the bilayer; sequence VYWGLNLLLGLLGVVTAG. At 86–142 the chain is on the periplasmic side; sequence RHVLLQNIPSEQLLACLPDMSFMLRQLSWWQALKLTFMGTSDCAEVTWTLLDMSLPE. C101 and C128 are oxidised to a cystine. Residues 143–161 traverse the membrane as a helical segment; sequence WSLLFFVIMLIFSGYRLWR. Over 162 to 173 the chain is Cytoplasmic; that stretch reads QLRGARKAVALP.

It belongs to the DsbB family.

Its subcellular location is the cell inner membrane. Functionally, required for disulfide bond formation in some periplasmic proteins. Acts by oxidizing the DsbA protein. This chain is Disulfide bond formation protein B 2, found in Pseudomonas fluorescens (strain ATCC BAA-477 / NRRL B-23932 / Pf-5).